The sequence spans 521 residues: Maturase K (521 aa).

Belongs to the intron maturase 2 family. MatK subfamily.

It is found in the plastid. The protein localises to the chloroplast. Its function is as follows. Usually encoded in the trnK tRNA gene intron. Probably assists in splicing its own and other chloroplast group II introns. This chain is Maturase K, found in Trillium erectum (Beth root).